Reading from the N-terminus, the 311-residue chain is HPr kinase/phosphorylase (311 aa).

Catalysis depends on residues histidine 136 and lysine 157. Glycine 151–serine 158 provides a ligand contact to ATP. Serine 158 is a Mg(2+) binding site. Aspartate 175 serves as the catalytic Proton acceptor; for phosphorylation activity. Proton donor; for dephosphorylation activity. Positions leucine 199–asparagine 208 are important for the catalytic mechanism of both phosphorylation and dephosphorylation. Glutamate 200 is a binding site for Mg(2+). The active site involves arginine 241. Positions proline 262–arginine 267 are important for the catalytic mechanism of dephosphorylation.

The protein belongs to the HPrK/P family. In terms of assembly, homohexamer. Mg(2+) is required as a cofactor.

The catalysed reaction is [HPr protein]-L-serine + ATP = [HPr protein]-O-phospho-L-serine + ADP + H(+). It catalyses the reaction [HPr protein]-O-phospho-L-serine + phosphate + H(+) = [HPr protein]-L-serine + diphosphate. Functionally, catalyzes the ATP- as well as the pyrophosphate-dependent phosphorylation of a specific serine residue in HPr, a phosphocarrier protein of the phosphoenolpyruvate-dependent sugar phosphotransferase system (PTS). HprK/P also catalyzes the pyrophosphate-producing, inorganic phosphate-dependent dephosphorylation (phosphorolysis) of seryl-phosphorylated HPr (P-Ser-HPr). The two antagonistic activities of HprK/P are regulated by several intracellular metabolites, which change their concentration in response to the absence or presence of rapidly metabolisable carbon sources (glucose, fructose, etc.) in the growth medium. Therefore, by controlling the phosphorylation state of HPr, HPrK/P is a sensor enzyme that plays a major role in the regulation of carbon metabolism and sugar transport: it mediates carbon catabolite repression (CCR), and regulates PTS-catalyzed carbohydrate uptake and inducer exclusion. The protein is HPr kinase/phosphorylase of Staphylococcus haemolyticus (strain JCSC1435).